Reading from the N-terminus, the 800-residue chain is Nuclear poly(A) polymerase 2 (800 aa).

Residues Phe-103–Ser-105, Ala-115–Asp-118, Asp-171, Lys-232, Tyr-241, and Gly-250–Val-251 contribute to the ATP site. Positions 116, 118, and 171 each coordinate Mg(2+). 2 consecutive short sequence motifs (nuclear localization signal) follow at residues Arg-487–Phe-494 and Lys-533–Ile-540. The interval Pro-497–Gln-576 is disordered. The span at Ser-527–Asp-538 shows a compositional bias: basic and acidic residues. The span at Pro-564–Pro-575 shows a compositional bias: polar residues.

This sequence belongs to the poly(A) polymerase family. Monomer. Forms a complex with cleavage and polyadenylation specificity factor (CPSF) subunits CPSF100, CPSF30, FIPS5 and PABN2. Requires Mg(2+) as cofactor. Mn(2+) is required as a cofactor. In terms of tissue distribution, mostly expressed in flowers (highly in the style, receptacle and pedicel, but weakly in the vasculature of sepals) and hypocotyls, and, to a lower extent, in roots and stems. Barely detected in leaves (petioles and vascular system).

The protein localises to the nucleus. The protein resides in the cytoplasm. The catalysed reaction is RNA(n) + ATP = RNA(n)-3'-adenine ribonucleotide + diphosphate. Its function is as follows. Essential protein. Polymerase that creates the 3'-poly(A) tail of mRNA's. Also required for the endoribonucleolytic cleavage reaction at some polyadenylation sites. May acquire specificity through interaction with a cleavage and polyadenylation specificity factor (CPSF) at its C-terminus. Mediates the polyadenylation of RNAs that are associated with polynucleotide phosphorylase (e.g. PNP1). This is Nuclear poly(A) polymerase 2 from Arabidopsis thaliana (Mouse-ear cress).